We begin with the raw amino-acid sequence, 495 residues long: UPF0371 protein CE2832 (495 aa).

This sequence belongs to the UPF0371 family.

The protein is UPF0371 protein CE2832 of Corynebacterium efficiens (strain DSM 44549 / YS-314 / AJ 12310 / JCM 11189 / NBRC 100395).